A 108-amino-acid chain; its full sequence is ATP synthase epsilon chain (108 aa).

Belongs to the ATPase epsilon chain family. As to quaternary structure, F-type ATPases have 2 components, CF(1) - the catalytic core - and CF(0) - the membrane proton channel. CF(1) has five subunits: alpha(3), beta(3), gamma(1), delta(1), epsilon(1). CF(0) has three main subunits: a, b and c.

Its subcellular location is the cell inner membrane. In terms of biological role, produces ATP from ADP in the presence of a proton gradient across the membrane. The chain is ATP synthase epsilon chain from Rickettsia bellii (strain OSU 85-389).